Here is a 599-residue protein sequence, read N- to C-terminus: Endoribonuclease ZC3H12A (599 aa).

The tract at residues 1-40 (MSGPCGEKPVLEASPTMSLWEFEDSHSRQGTPRPGQELAA) is disordered. The segment at 42 to 87 (EASALELQMKVDFFRKLGYSSTEIHSVLQKLGVQADTNTVLGELVK) is ubiquitin association domain. The interval 81–150 (VLGELVKHGT…DGSNVAMSHG (70 aa)) is necessary for interaction with TANK. Residues 90-133 (TATERERQTSPDPCPQLPLVPRGGGTPKAPNLEPPLPEEEKEGS) are disordered. Position 99 is a phosphoserine (S99). Positions 112–297 (GGGTPKAPNL…LDNFLRKKPL (186 aa)) are RNase. In terms of domain architecture, RNase NYN spans 135–290 (LRPVVIDGSN…LGRHGPSLDN (156 aa)). Residues 214–220 (RRVGGKR) are RNA binding. Residue D226 participates in Mg(2+) binding. The C3H1-type zinc-finger motif lies at 301–324 (HRKQPCPYGRKCTYGIKCRFFHPE). The tract at residues 301 to 457 (HRKQPCPYGR…SELWGVRGGG (157 aa)) is necessary for interaction with ZC3H12D. The segment at 343–420 (LSPPRAPSKD…SGSSFGPTDW (78 aa)) is disordered. Residue S344 is modified to Phosphoserine. Over residues 358–375 (PSPSSQSSSLLTESEQCS) the composition is skewed to low complexity. Positions 386 to 399 (SPGSRQEGLTQTYA) are enriched in polar residues. Phosphoserine occurs at positions 438 and 442. Residues 522-546 (PPPTSVLQEPPVQSPGAGRSPWGRA) are disordered.

The protein belongs to the ZC3H12 family. Oligomer. Found in a deubiquitination complex with TANK, USP10 and ZC3H12A; this complex inhibits genotoxic stress- or interleukin-1-beta-mediated NF-kappaB activation by promoting IKBKG or TRAF6 deubiquitination. Interacts with IKBKG; this interaction increases in response to DNA damage. Interacts with TANK; this interaction increases in response to DNA damage and serves as a bridge to anchor both TANK and USP10 into a deubiquitinating complex. Interacts with TRAF6; this interaction increases in response to DNA damage and is stimulated by TANK. Interacts with USP10; this interaction increases in response to DNA damage and serves as a bridge to anchor both TANK and USP10 into a deubiquitinating complex. Interacts with ZC3H12D. Interacts with TNRC6A. Interacts with IKBKB/IKKB. Interacts with IKBKB/IKKB. Interacts with BTRC; the interaction occurs when ZC3H12A is phosphorylated in a IKBKB/IKKB-dependent manner. Interacts with IRAK1; this interaction increases the interaction between ZC3H12A and IKBKB/IKKB. Interacts with UPF1; this interaction occurs in a mRNA translationally active- and termination-dependent manner and is essential for ZC3H12A-mediated degradation of target mRNAs. Associates with ribosomes. Interacts with ubiquitin. As to quaternary structure, (Microbial infection) Oligomerization is necessary for antiviral activity. Mg(2+) serves as cofactor. In terms of processing, phosphorylated by IRAK1; phosphorylation is necessary for subsequent phosphorylation by the I-kappa-B-kinase (IKK) complex. Phosphorylated by I-kappa-B-kinase (IKK) subunits IKBKB/IKKB and CHUK/IKKA at Ser-438 and Ser-442; these phosphorylations promote ubiquitin proteasome-mediated degradation of ZC3H12A and hence facilitates rapid and robust production of IL-6 mRNA in response to toll-like receptor (TLR) or IL-1 receptor stimuli. (Microbial infection) Rapidly degraded in activated T-cells in response to phorbol 13-acetate 12-myristate (PMA) during HIV-1 viral infection. Post-translationally, ubiquitinated; ubiquitination is induced in response to interleukin IL1 receptor stimuli in a IKBKB/IKKB and IRAK1-dependent manner, leading to proteasome-mediated degradation. In terms of processing, proteolytically cleaved between Arg-111 and Arg-214 by MALT1 in activated T-cells; cleavage at Arg-111 is critical for promoting ZC3H12A degradation in response to T-cell receptor (TCR) stimulation, and hence is necessary for prolonging the stability of a set of mRNAs controlling T-cell activation and Th17 cell differentiation. As to expression, expressed in heart, placenta, spleen, kidney, liver and lung. Expressed in leukocytes. Expressed in monocyte.

It localises to the nucleus. It is found in the cytoplasm. The protein localises to the P-body. Its subcellular location is the rough endoplasmic reticulum membrane. The protein resides in the cytoplasmic granule. Endoribonuclease involved in various biological functions such as cellular inflammatory response and immune homeostasis, glial differentiation of neuroprogenitor cells, cell death of cardiomyocytes, adipogenesis and angiogenesis. Functions as an endoribonuclease involved in mRNA decay. Modulates the inflammatory response by promoting the degradation of a set of translationally active cytokine-induced inflammation-related mRNAs, such as IL6 and IL12B, during the early phase of inflammation. Prevents aberrant T-cell-mediated immune reaction by degradation of multiple mRNAs controlling T-cell activation, such as those encoding cytokines (IL6 and IL2), cell surface receptors (ICOS, TNFRSF4 and TNFR2) and transcription factor (REL). Inhibits cooperatively with ZC3H12A the differentiation of helper T cells Th17 in lungs. They repress target mRNA encoding the Th17 cell-promoting factors IL6, ICOS, REL, IRF4, NFKBID and NFKBIZ. The cooperation requires RNA-binding by RC3H1 and the nuclease activity of ZC3H12A. Together with RC3H1, destabilizes TNFRSF4/OX40 mRNA by binding to the conserved stem loop structure in its 3'UTR. Self regulates by destabilizing its own mRNA. Cleaves mRNA harboring a stem-loop (SL), often located in their 3'-UTRs, during the early phase of inflammation in a helicase UPF1-dependent manner. Plays a role in the inhibition of microRNAs (miRNAs) biogenesis. Cleaves the terminal loop of a set of precursor miRNAs (pre-miRNAs) important for the regulation of the inflammatory response leading to their degradation, and thus preventing the biosynthesis of mature miRNAs. Also plays a role in promoting angiogenesis in response to inflammatory cytokines by inhibiting the production of antiangiogenic microRNAs via its anti-dicer RNase activity. Affects the overall ubiquitination of cellular proteins. Positively regulates deubiquitinase activity promoting the cleavage at 'Lys-48'- and 'Lys-63'-linked polyubiquitin chains on TNF receptor-associated factors (TRAFs), preventing JNK and NF-kappa-B signaling pathway activation, and hence negatively regulating macrophage-mediated inflammatory response and immune homeostasis. Also induces deubiquitination of the transcription factor HIF1A, probably leading to its stabilization and nuclear import, thereby positively regulating the expression of proangiogenic HIF1A-targeted genes. Involved in a TANK-dependent negative feedback response to attenuate NF-kappaB activation through the deubiquitination of IKBKG or TRAF6 in response to interleukin-1-beta (IL1B) stimulation or upon DNA damage. Prevents stress granule (SGs) formation and promotes macrophage apoptosis under stress conditions, including arsenite-induced oxidative stress, heat shock and energy deprivation. Plays a role in the regulation of macrophage polarization; promotes IL4-induced polarization of macrophages M1 into anti-inflammatory M2 state. May also act as a transcription factor that regulates the expression of multiple genes involved in inflammatory response, angiogenesis, adipogenesis and apoptosis. Functions as a positive regulator of glial differentiation of neuroprogenitor cells through an amyloid precursor protein (APP)-dependent signaling pathway. Attenuates septic myocardial contractile dysfunction in response to lipopolysaccharide (LPS) by reducing I-kappa-B-kinase (IKK)-mediated NF-kappa-B activation, and hence myocardial pro-inflammatory cytokine production. Its function is as follows. (Microbial infection) Binds to Japanese encephalitis virus (JEV) and Dengue virus (DEN) RNAs. In terms of biological role, (Microbial infection) Exhibits antiviral activity against HIV-1 in lymphocytes by decreasing the abundance of HIV-1 viral RNA species. This is Endoribonuclease ZC3H12A from Homo sapiens (Human).